The chain runs to 452 residues: tRNA modification GTPase MnmE (452 aa).

(6S)-5-formyl-5,6,7,8-tetrahydrofolate contacts are provided by Arg22, Glu80, and Lys119. The TrmE-type G domain occupies Gly213–Phe375. Asn223 provides a ligand contact to K(+). Residues Asn223–Thr228, Thr242–Thr248, and Asp267–Gly270 contribute to the GTP site. Residue Ser227 participates in Mg(2+) binding. K(+) contacts are provided by Thr242, Ile244, and Thr247. Thr248 contributes to the Mg(2+) binding site. Lys452 is a binding site for (6S)-5-formyl-5,6,7,8-tetrahydrofolate.

The protein belongs to the TRAFAC class TrmE-Era-EngA-EngB-Septin-like GTPase superfamily. TrmE GTPase family. As to quaternary structure, homodimer. Heterotetramer of two MnmE and two MnmG subunits. The cofactor is K(+).

It localises to the cytoplasm. Its function is as follows. Exhibits a very high intrinsic GTPase hydrolysis rate. Involved in the addition of a carboxymethylaminomethyl (cmnm) group at the wobble position (U34) of certain tRNAs, forming tRNA-cmnm(5)s(2)U34. In Petrotoga mobilis (strain DSM 10674 / SJ95), this protein is tRNA modification GTPase MnmE.